Here is a 253-residue protein sequence, read N- to C-terminus: Tryptophan synthase alpha chain (253 aa).

Active-site proton acceptor residues include E45 and D56.

It belongs to the TrpA family. As to quaternary structure, tetramer of two alpha and two beta chains.

It catalyses the reaction (1S,2R)-1-C-(indol-3-yl)glycerol 3-phosphate + L-serine = D-glyceraldehyde 3-phosphate + L-tryptophan + H2O. Its pathway is amino-acid biosynthesis; L-tryptophan biosynthesis; L-tryptophan from chorismate: step 5/5. Functionally, the alpha subunit is responsible for the aldol cleavage of indoleglycerol phosphate to indole and glyceraldehyde 3-phosphate. The chain is Tryptophan synthase alpha chain from Flavobacterium psychrophilum (strain ATCC 49511 / DSM 21280 / CIP 103535 / JIP02/86).